A 138-amino-acid chain; its full sequence is MIVNSCQLNVVSVEKSIFSGVIKKIYVMGVEGELGIFPGHSPLLTLIKPGLLKIFQVYNNEYLYLSGGILEVQPTVITILADVAIRAKDLDEKKVRDSKRLSEEKIKKMRHGDVDYIKISMEISKAIAQLRLIELTKK.

It belongs to the ATPase epsilon chain family. F-type ATPases have 2 components, CF(1) - the catalytic core - and CF(0) - the membrane proton channel. CF(1) has five subunits: alpha(3), beta(3), gamma(1), delta(1), epsilon(1). CF(0) has three main subunits: a, b and c.

Its subcellular location is the cell inner membrane. Produces ATP from ADP in the presence of a proton gradient across the membrane. In Blochmanniella floridana, this protein is ATP synthase epsilon chain.